The chain runs to 949 residues: Glycine dehydrogenase (decarboxylating) (949 aa).

Lys-704 is modified (N6-(pyridoxal phosphate)lysine).

Belongs to the GcvP family. The glycine cleavage system is composed of four proteins: P, T, L and H. The cofactor is pyridoxal 5'-phosphate.

It carries out the reaction N(6)-[(R)-lipoyl]-L-lysyl-[glycine-cleavage complex H protein] + glycine + H(+) = N(6)-[(R)-S(8)-aminomethyldihydrolipoyl]-L-lysyl-[glycine-cleavage complex H protein] + CO2. In terms of biological role, the glycine cleavage system catalyzes the degradation of glycine. The P protein binds the alpha-amino group of glycine through its pyridoxal phosphate cofactor; CO(2) is released and the remaining methylamine moiety is then transferred to the lipoamide cofactor of the H protein. The sequence is that of Glycine dehydrogenase (decarboxylating) from Bacteroides thetaiotaomicron (strain ATCC 29148 / DSM 2079 / JCM 5827 / CCUG 10774 / NCTC 10582 / VPI-5482 / E50).